Consider the following 391-residue polypeptide: MKKRVIIHVDMDAFFAAVEQRDNPELKGKPVIVGGVPGERGVVAAASYEARKFGVRSAMSLWEAARLCPHGIFIPGNHKKYQEVSEKIFRIFREYTPLVEPVSLDEAYLDVTGSQKLFGPGAEIGKKIKKRIFEETELTASVGVAPNKFLAKLASEVNKPDGFCEVREDNVLDFLAPLPVEMLWGVGEKMKERLNDMGIKTVQDFWELPEFFLRKKFGVLGQNLYYLSRGIDFREVIPERVPKSLGKEITLQKDSSDVDYLLGKLLGLTMAVGRGLRREGFYAGGISVKIRLSSFITYTRHSRFFEPTWMDDVLYREAKRLFLENYHGELPVRLVGVTATPLVPVGGGRQISLFGEDLRRENLYPIIDRLNHKYGNKTVTRAKILKISGRG.

Positions 6–187 constitute a UmuC domain; that stretch reads IIHVDMDAFF…LPVEMLWGVG (182 aa). Asp-10 and Asp-105 together coordinate Mg(2+). Glu-106 is a catalytic residue.

The protein belongs to the DNA polymerase type-Y family. In terms of assembly, monomer. The cofactor is Mg(2+).

It is found in the cytoplasm. It catalyses the reaction DNA(n) + a 2'-deoxyribonucleoside 5'-triphosphate = DNA(n+1) + diphosphate. Its function is as follows. Poorly processive, error-prone DNA polymerase involved in untargeted mutagenesis. Copies undamaged DNA at stalled replication forks, which arise in vivo from mismatched or misaligned primer ends. These misaligned primers can be extended by PolIV. Exhibits no 3'-5' exonuclease (proofreading) activity. May be involved in translesional synthesis, in conjunction with the beta clamp from PolIII. The polypeptide is DNA polymerase IV (Carboxydothermus hydrogenoformans (strain ATCC BAA-161 / DSM 6008 / Z-2901)).